Reading from the N-terminus, the 120-residue chain is Autophagy-related protein 8C (120 aa).

The tract at residues Met1–Asn20 is disordered. Gly117 carries the Phosphatidylethanolamine amidated glycine lipid modification. Positions Leu118 to Val120 are cleaved as a propeptide — removed in mature form.

Belongs to the ATG8 family. In terms of assembly, interacts with ATG4. In terms of processing, the C-terminal 3 residues are removed by ATG4 to expose Gly-117 at the C-terminus. The C-terminal Gly is then amidated with phosphatidylethanolamine by an activating system similar to that for ubiquitin.

Its subcellular location is the cytoplasmic vesicle. The protein localises to the autophagosome membrane. The protein resides in the vacuole membrane. It localises to the cytoplasm. It is found in the cytoskeleton. Its function is as follows. Ubiquitin-like modifier involved in autophagosomes formation. May mediate the delivery of the autophagosomes to the vacuole via the microtubule cytoskeleton. The polypeptide is Autophagy-related protein 8C (ATG8C) (Oryza sativa subsp. indica (Rice)).